A 729-amino-acid polypeptide reads, in one-letter code: Fatty acid oxidation complex subunit alpha (729 aa).

Residues 1–189 (MLYKGDTLYL…KIGLVDGVVK (189 aa)) are enoyl-CoA hydratase/isomerase. Aspartate 296 lines the substrate pocket. The 3-hydroxyacyl-CoA dehydrogenase stretch occupies residues 311–729 (ETPKQAAVLG…ARPVGDLKTA (419 aa)). NAD(+) contacts are provided by residues methionine 324, aspartate 343, 400–402 (VVE), lysine 407, and serine 429. Residue histidine 450 is the For 3-hydroxyacyl-CoA dehydrogenase activity of the active site. Asparagine 453 contributes to the NAD(+) binding site. Substrate contacts are provided by asparagine 500 and tyrosine 660. The tract at residues 708–729 (RHNEPYYPPVEPARPVGDLKTA) is disordered.

It in the N-terminal section; belongs to the enoyl-CoA hydratase/isomerase family. This sequence in the C-terminal section; belongs to the 3-hydroxyacyl-CoA dehydrogenase family. As to quaternary structure, heterotetramer of two alpha chains (FadB) and two beta chains (FadA).

The enzyme catalyses a (3S)-3-hydroxyacyl-CoA + NAD(+) = a 3-oxoacyl-CoA + NADH + H(+). The catalysed reaction is a (3S)-3-hydroxyacyl-CoA = a (2E)-enoyl-CoA + H2O. It catalyses the reaction a 4-saturated-(3S)-3-hydroxyacyl-CoA = a (3E)-enoyl-CoA + H2O. It carries out the reaction (3S)-3-hydroxybutanoyl-CoA = (3R)-3-hydroxybutanoyl-CoA. The enzyme catalyses a (3Z)-enoyl-CoA = a 4-saturated (2E)-enoyl-CoA. The catalysed reaction is a (3E)-enoyl-CoA = a 4-saturated (2E)-enoyl-CoA. It functions in the pathway lipid metabolism; fatty acid beta-oxidation. Its function is as follows. Involved in the aerobic and anaerobic degradation of long-chain fatty acids via beta-oxidation cycle. Catalyzes the formation of 3-oxoacyl-CoA from enoyl-CoA via L-3-hydroxyacyl-CoA. It can also use D-3-hydroxyacyl-CoA and cis-3-enoyl-CoA as substrate. The chain is Fatty acid oxidation complex subunit alpha from Escherichia coli O139:H28 (strain E24377A / ETEC).